The following is a 341-amino-acid chain: Ketol-acid reductoisomerase (NADP(+)) (341 aa).

Residues Ala2–Thr181 enclose the KARI N-terminal Rossmann domain. Residues Tyr25 to Gln28, Arg48, Ser52, and Asp82 to Gln85 contribute to the NADP(+) site. Residue His107 is part of the active site. Residue Gly133 coordinates NADP(+). In terms of domain architecture, KARI C-terminal knotted spans Thr182 to Val327. Mg(2+) contacts are provided by Asp190, Glu194, Glu226, and Glu230. Residue Ser251 participates in substrate binding.

This sequence belongs to the ketol-acid reductoisomerase family. Mg(2+) is required as a cofactor.

It carries out the reaction (2R)-2,3-dihydroxy-3-methylbutanoate + NADP(+) = (2S)-2-acetolactate + NADPH + H(+). The catalysed reaction is (2R,3R)-2,3-dihydroxy-3-methylpentanoate + NADP(+) = (S)-2-ethyl-2-hydroxy-3-oxobutanoate + NADPH + H(+). Its pathway is amino-acid biosynthesis; L-isoleucine biosynthesis; L-isoleucine from 2-oxobutanoate: step 2/4. It participates in amino-acid biosynthesis; L-valine biosynthesis; L-valine from pyruvate: step 2/4. Functionally, involved in the biosynthesis of branched-chain amino acids (BCAA). Catalyzes an alkyl-migration followed by a ketol-acid reduction of (S)-2-acetolactate (S2AL) to yield (R)-2,3-dihydroxy-isovalerate. In the isomerase reaction, S2AL is rearranged via a Mg-dependent methyl migration to produce 3-hydroxy-3-methyl-2-ketobutyrate (HMKB). In the reductase reaction, this 2-ketoacid undergoes a metal-dependent reduction by NADPH to yield (R)-2,3-dihydroxy-isovalerate. The sequence is that of Ketol-acid reductoisomerase (NADP(+)) from Geobacillus sp. (strain WCH70).